A 203-amino-acid polypeptide reads, in one-letter code: Auxin-induced protein 22E (203 aa).

The short motif at 15–19 (LRLGL) is the EAR-like (transcriptional repression) element. The tract at residues 15–77 (LRLGLPGSDE…DHNEDSVQPA (63 aa)) is disordered. Positions 43–52 (SSPELEESRC) are enriched in basic and acidic residues. Residues 58-67 (SDSSDSTTTS) show a composition bias toward low complexity. The PB1 domain occupies 107–199 (GMYLKVSMAG…RIIKGSEAKG (93 aa)).

Belongs to the Aux/IAA family. Homodimers and heterodimers.

It localises to the nucleus. Functionally, aux/IAA proteins are short-lived transcriptional factors that function as repressors of early auxin response genes at low auxin concentrations. Repression is thought to result from the interaction with auxin response factors (ARFs), proteins that bind to the auxin-responsive promoter element (AuxRE). Formation of heterodimers with ARF proteins may alter their ability to modulate early auxin response genes expression. The polypeptide is Auxin-induced protein 22E (AUX22E) (Vigna radiata var. radiata (Mung bean)).